Consider the following 377-residue polypeptide: GTP 3',8-cyclase (377 aa).

Residues 1-29 (MTTRLYLSPTPPRNDREGASKSTSASIKH) form a disordered region. Positions 45 to 271 (RFGRIARDLR…FTLSPAKEPR (227 aa)) constitute a Radical SAM core domain. GTP is bound at residue Arg54. Cys61 and Cys65 together coordinate [4Fe-4S] cluster. Tyr67 is a binding site for S-adenosyl-L-methionine. Cys68 contacts [4Fe-4S] cluster. Position 105 (Arg105) interacts with GTP. Gly109 provides a ligand contact to S-adenosyl-L-methionine. Residue Thr140 participates in GTP binding. S-adenosyl-L-methionine is bound at residue Ser164. Residue Lys201 participates in GTP binding. Met235 contributes to the S-adenosyl-L-methionine binding site. [4Fe-4S] cluster-binding residues include Cys304 and Cys307. 309 to 311 (RSR) lines the GTP pocket. Position 321 (Cys321) interacts with [4Fe-4S] cluster.

It belongs to the radical SAM superfamily. MoaA family. In terms of assembly, monomer and homodimer. The cofactor is [4Fe-4S] cluster.

The enzyme catalyses GTP + AH2 + S-adenosyl-L-methionine = (8S)-3',8-cyclo-7,8-dihydroguanosine 5'-triphosphate + 5'-deoxyadenosine + L-methionine + A + H(+). Its pathway is cofactor biosynthesis; molybdopterin biosynthesis. Catalyzes the cyclization of GTP to (8S)-3',8-cyclo-7,8-dihydroguanosine 5'-triphosphate. The chain is GTP 3',8-cyclase from Corynebacterium glutamicum (strain R).